We begin with the raw amino-acid sequence, 575 residues long: Sodium/hydrogen exchanger 8 (575 aa).

11 helical membrane passes run 54-74 (MTIF…HLLI), 78-98 (LHFL…GAVI), 117-137 (PNMF…YSLH), 150-170 (LFAV…IYFL), 185-205 (FAFG…IFNA), 255-275 (LGYF…TGLI), 305-325 (GLAE…GIVM), 348-368 (VAFL…FSFP), 373-393 (ISFV…NIFP), 411-431 (MFIM…SLHL), and 445-465 (TTII…MPLI). Threonine 504 is subject to Phosphothreonine. Phosphoserine occurs at positions 565 and 567.

Belongs to the monovalent cation:proton antiporter 1 (CPA1) transporter (TC 2.A.36) family. In terms of tissue distribution, intestine and kidneys.

Its subcellular location is the golgi apparatus membrane. The protein localises to the golgi apparatus. The protein resides in the trans-Golgi network membrane. It localises to the endosome. It is found in the multivesicular body membrane. Its subcellular location is the apical cell membrane. The protein localises to the cytoplasmic vesicle. The protein resides in the secretory vesicle. It localises to the acrosome. It carries out the reaction Na(+)(in) + H(+)(out) = Na(+)(out) + H(+)(in). Its activity is regulated as follows. Expression and activity are regulated by acid media by increasing the rate of trafficking to the apical membrane. Inhibited by HOE694 and S3226. In terms of biological role, na(+)/H(+) antiporter. Mediates the electoneutral exchange of intracellular H(+) ions for extracellular Na(+) in 1:1 stoichiometry. Acts as an Na(+)/H(+) exchanger in the trans-Golgi. Contributes to the regulation of pH regulation of Golgi apparatus, and consequently, in protein trafficking and endosomal morphology. In germ cells, plays a crucial role in acrosome biogenesis and sperm development, probably by playing a role in the fusion of the Golgi-derived vesicles that form the acrosomal cap. Can also be active at the cell surface of specialized cells. In the small intestine, at the cell membrane, plays a major physiological role in transepithelial absorption of Na(+) and regulates intracellular pH homeostasis of intestinal epithelial cells. Acts as an important regulator of mucosal integrity in the intestine and in the stomach, could mediate the pH fluctuation necessary for mucin exocytosis or assist membrane trafficking of other proteins. Plays a role in photoreceptor survival and in the maintenance of intracellular pH homeostasis in retinal pigment epithelium (RPE cells). The sequence is that of Sodium/hydrogen exchanger 8 (Slc9a8) from Rattus norvegicus (Rat).